A 444-amino-acid polypeptide reads, in one-letter code: Alanyl-tRNA editing protein Aarsd1 (444 aa).

Zn(2+)-binding residues include H109 and H113. Position 174 is a phosphoserine (S174). Positions 209 and 213 each coordinate Zn(2+).

The protein belongs to the class-II aminoacyl-tRNA synthetase family. Alax-L subfamily. Zn(2+) serves as cofactor.

The protein resides in the cytoplasm. Functions in trans to edit the amino acid moiety from incorrectly charged tRNA(Ala). This chain is Alanyl-tRNA editing protein Aarsd1 (AARSD1), found in Bos taurus (Bovine).